The following is a 1275-amino-acid chain: Myosin-1 (1275 aa).

A Myosin motor domain is found at 35 to 727 (VGVSDLTLLS…TLFAMEDMRD (693 aa)). 128 to 135 (GESGAGKT) serves as a coordination point for ATP. The residue at position 361 (Ser-361) is a Phosphoserine. The tract at residues 410 to 493 (TIGILDIYGF…PGLFAALNDS (84 aa)) is actin-binding. 2 consecutive IQ domains span residues 731–751 (HNMA…KEDA) and 752–777 (ARLI…YGNG). One can recognise a TH1 domain in the interval 785 to 974 (RRRMSMLGSR…KSGTVSVRPG (190 aa)). 4 disordered regions span residues 966–1064 (SGTV…LNNN), 1089–1128 (QNHN…AKPK), 1183–1230 (SECP…GGLS), and 1251–1275 (IADA…DDDW). Over residues 977–992 (PDSQNPKRPRATSSKV) the composition is skewed to polar residues. A compositionally biased stretch (low complexity) spans 1095–1106 (PTAPSRPAKKAA). Residues 1107 to 1121 (PAPPVKKTAPPPPPS) show a composition bias toward pro residues. Positions 1127 to 1187 (PKWPTFKANY…PTAYISECPP (61 aa)) constitute an SH3 domain. A compositionally biased stretch (basic and acidic residues) spans 1254–1263 (ALKKRSATRD). Over residues 1264–1275 (SDDEEEDDDDDW) the composition is skewed to acidic residues.

The protein belongs to the TRAFAC class myosin-kinesin ATPase superfamily. Myosin family. Post-translationally, phosphorylation of the TEDS site (Ser-361) is required for the polarization of the actin cytoskeleton. Phosphorylation probably activates the myosin-I ATPase activity.

The protein localises to the cytoplasm. Its subcellular location is the cytoskeleton. It localises to the actin patch. Functionally, type-I myosin implicated in the organization of the actin cytoskeleton. Required for proper actin cytoskeleton polarization. At the cell cortex, assembles in patch-like structures together with proteins from the actin-polymerizing machinery and promotes actin assembly. Functions as actin nucleation-promoting factor (NPF) for the Arp2/3 complex. The chain is Myosin-1 (MYO1) from Meyerozyma guilliermondii (strain ATCC 6260 / CBS 566 / DSM 6381 / JCM 1539 / NBRC 10279 / NRRL Y-324) (Yeast).